The chain runs to 472 residues: Adenosylhomocysteinase (472 aa).

Substrate contacts are provided by T61, D136, and E196. Residue 197-199 (TTT) participates in NAD(+) binding. 2 residues coordinate substrate: K226 and D230. NAD(+) is bound by residues N231, 260 to 265 (GYGDVG), E283, N318, 339 to 341 (IGH), and N384.

The protein belongs to the adenosylhomocysteinase family. The cofactor is NAD(+).

The protein resides in the cytoplasm. The enzyme catalyses S-adenosyl-L-homocysteine + H2O = L-homocysteine + adenosine. The protein operates within amino-acid biosynthesis; L-homocysteine biosynthesis; L-homocysteine from S-adenosyl-L-homocysteine: step 1/1. Functionally, may play a key role in the regulation of the intracellular concentration of adenosylhomocysteine. The sequence is that of Adenosylhomocysteinase from Cupriavidus necator (strain ATCC 17699 / DSM 428 / KCTC 22496 / NCIMB 10442 / H16 / Stanier 337) (Ralstonia eutropha).